We begin with the raw amino-acid sequence, 581 residues long: Glutamyl-tRNA reductase (581 aa).

Substrate contacts are provided by residues 49–52, Ser109, 114–116, and Gln120; these read TCNR and EGQ. Cys50 (nucleophile) is an active-site residue. 192–197 lines the NADP(+) pocket; the sequence is GAGSMS. An insert region spans residues 292–416; that stretch reads PAVEDTAVQE…AEAPRPQPVL (125 aa).

Belongs to the glutamyl-tRNA reductase family. As to quaternary structure, homodimer.

It carries out the reaction (S)-4-amino-5-oxopentanoate + tRNA(Glu) + NADP(+) = L-glutamyl-tRNA(Glu) + NADPH + H(+). It participates in porphyrin-containing compound metabolism; protoporphyrin-IX biosynthesis; 5-aminolevulinate from L-glutamyl-tRNA(Glu): step 1/2. Functionally, catalyzes the NADPH-dependent reduction of glutamyl-tRNA(Glu) to glutamate 1-semialdehyde (GSA). The polypeptide is Glutamyl-tRNA reductase (Streptomyces coelicolor (strain ATCC BAA-471 / A3(2) / M145)).